A 156-amino-acid chain; its full sequence is Small ribosomal subunit protein uS7 (156 aa).

It belongs to the universal ribosomal protein uS7 family. In terms of assembly, part of the 30S ribosomal subunit. Contacts proteins S9 and S11.

Its function is as follows. One of the primary rRNA binding proteins, it binds directly to 16S rRNA where it nucleates assembly of the head domain of the 30S subunit. Is located at the subunit interface close to the decoding center, probably blocks exit of the E-site tRNA. This chain is Small ribosomal subunit protein uS7, found in Anaeromyxobacter dehalogenans (strain 2CP-1 / ATCC BAA-258).